A 312-amino-acid polypeptide reads, in one-letter code: Ribonuclease HIII (312 aa).

The RNase H type-2 domain maps to 95 to 311 (FNCIGSDEAG…REKAQKILKP (217 aa)). The a divalent metal cation site is built by D101, E102, and D206.

It belongs to the RNase HII family. RnhC subfamily. The cofactor is Mn(2+). Mg(2+) serves as cofactor.

It is found in the cytoplasm. It carries out the reaction Endonucleolytic cleavage to 5'-phosphomonoester.. Endonuclease that specifically degrades the RNA of RNA-DNA hybrids. The chain is Ribonuclease HIII from Staphylococcus aureus (strain MSSA476).